A 103-amino-acid chain; its full sequence is Small ribosomal subunit protein cS23 (103 aa).

Belongs to the chloroplast-specific ribosomal protein cS23 family. In terms of assembly, part of the 30S ribosomal subunit.

It localises to the plastid. The protein localises to the chloroplast. Its function is as follows. Probably a ribosomal protein or a ribosome-associated protein. In Euglena granulata, this protein is Small ribosomal subunit protein cS23 (ycf65).